A 340-amino-acid chain; its full sequence is Beta-ketoacyl-[acyl-carrier-protein] synthase III (340 aa).

Residues Cys-119 and His-260 contribute to the active site. Residues 261–265 (QANYR) form an ACP-binding region. Residue Asn-290 is part of the active site.

Belongs to the thiolase-like superfamily. FabH family. Homodimer.

The protein resides in the cytoplasm. It catalyses the reaction malonyl-[ACP] + acetyl-CoA + H(+) = 3-oxobutanoyl-[ACP] + CO2 + CoA. It participates in lipid metabolism; fatty acid biosynthesis. Catalyzes the condensation reaction of fatty acid synthesis by the addition to an acyl acceptor of two carbons from malonyl-ACP. Catalyzes the first condensation reaction which initiates fatty acid synthesis and may therefore play a role in governing the total rate of fatty acid production. Possesses both acetoacetyl-ACP synthase and acetyl transacylase activities. Its substrate specificity determines the biosynthesis of branched-chain and/or straight-chain of fatty acids. The sequence is that of Beta-ketoacyl-[acyl-carrier-protein] synthase III from Sulfurovum sp. (strain NBC37-1).